The sequence spans 166 residues: Ureidoglycolate lyase (166 aa).

The protein belongs to the ureidoglycolate lyase family. In terms of assembly, homodimer. The cofactor is Ni(2+).

It carries out the reaction (S)-ureidoglycolate = urea + glyoxylate. The protein operates within nitrogen metabolism; (S)-allantoin degradation. Catalyzes the catabolism of the allantoin degradation intermediate (S)-ureidoglycolate, generating urea and glyoxylate. Involved in the utilization of allantoin as nitrogen source. This is Ureidoglycolate lyase from Agrobacterium fabrum (strain C58 / ATCC 33970) (Agrobacterium tumefaciens (strain C58)).